The sequence spans 337 residues: Tryptophan--tRNA ligase (337 aa).

ATP is bound by residues arginine 9–threonine 11 and glycine 17–histidine 18. The 'HIGH' region motif lies at proline 10 to histidine 18. Aspartate 137 serves as a coordination point for L-tryptophan. ATP is bound by residues glycine 149–aspartate 151, leucine 187, and lysine 195–serine 199. The 'KMSKS' region signature appears at lysine 195–serine 199.

It belongs to the class-I aminoacyl-tRNA synthetase family. Homodimer.

It localises to the cytoplasm. The catalysed reaction is tRNA(Trp) + L-tryptophan + ATP = L-tryptophyl-tRNA(Trp) + AMP + diphosphate + H(+). Functionally, catalyzes the attachment of tryptophan to tRNA(Trp). The chain is Tryptophan--tRNA ligase from Treponema pallidum (strain Nichols).